Here is a 274-residue protein sequence, read N- to C-terminus: 4-hydroxy-tetrahydrodipicolinate reductase (274 aa).

NAD(+) contacts are provided by residues 8-13, Glu-34, 102-104, and 128-131; these read GALGRM, GTT, and SQNF. His-160 (proton donor/acceptor) is an active-site residue. His-161 is a binding site for (S)-2,3,4,5-tetrahydrodipicolinate. Residue Lys-164 is the Proton donor of the active site. 170-171 provides a ligand contact to (S)-2,3,4,5-tetrahydrodipicolinate; it reads GT.

This sequence belongs to the DapB family.

It localises to the cytoplasm. The enzyme catalyses (S)-2,3,4,5-tetrahydrodipicolinate + NAD(+) + H2O = (2S,4S)-4-hydroxy-2,3,4,5-tetrahydrodipicolinate + NADH + H(+). It carries out the reaction (S)-2,3,4,5-tetrahydrodipicolinate + NADP(+) + H2O = (2S,4S)-4-hydroxy-2,3,4,5-tetrahydrodipicolinate + NADPH + H(+). Its pathway is amino-acid biosynthesis; L-lysine biosynthesis via DAP pathway; (S)-tetrahydrodipicolinate from L-aspartate: step 4/4. Functionally, catalyzes the conversion of 4-hydroxy-tetrahydrodipicolinate (HTPA) to tetrahydrodipicolinate. This is 4-hydroxy-tetrahydrodipicolinate reductase from Methanocaldococcus jannaschii (strain ATCC 43067 / DSM 2661 / JAL-1 / JCM 10045 / NBRC 100440) (Methanococcus jannaschii).